A 257-amino-acid chain; its full sequence is Putative hydro-lyase Bcenmc03_3969 (257 aa).

It belongs to the D-glutamate cyclase family.

This chain is Putative hydro-lyase Bcenmc03_3969, found in Burkholderia orbicola (strain MC0-3).